The following is a 955-amino-acid chain: Isoleucine--tRNA ligase (955 aa).

The short motif at 60–70 is the 'HIGH' region element; sequence PYANGDLHIGH. Glu563 contributes to the L-isoleucyl-5'-AMP binding site. Positions 604–608 match the 'KMSKS' region motif; sequence KMSKS. Residue Lys607 coordinates ATP. Zn(2+) contacts are provided by Cys926, Cys929, Cys946, and Cys949.

Belongs to the class-I aminoacyl-tRNA synthetase family. IleS type 1 subfamily. In terms of assembly, monomer. Zn(2+) is required as a cofactor.

It is found in the cytoplasm. The enzyme catalyses tRNA(Ile) + L-isoleucine + ATP = L-isoleucyl-tRNA(Ile) + AMP + diphosphate. In terms of biological role, catalyzes the attachment of isoleucine to tRNA(Ile). As IleRS can inadvertently accommodate and process structurally similar amino acids such as valine, to avoid such errors it has two additional distinct tRNA(Ile)-dependent editing activities. One activity is designated as 'pretransfer' editing and involves the hydrolysis of activated Val-AMP. The other activity is designated 'posttransfer' editing and involves deacylation of mischarged Val-tRNA(Ile). The chain is Isoleucine--tRNA ligase from Cyanothece sp. (strain PCC 7425 / ATCC 29141).